A 335-amino-acid chain; its full sequence is Tyrosine-protein phosphatase 1 (335 aa).

Residues 15–328 form the Tyrosine-protein phosphatase domain; sequence LLGKFKFIQN…LFIYHAAKYL (314 aa). Position 83 is a phosphoserine; by CLK1 (S83). C252 serves as the catalytic Phosphocysteine intermediate.

The protein belongs to the protein-tyrosine phosphatase family. Non-receptor class subfamily. In terms of processing, activated by phosphorylation at Ser-83.

It localises to the cytoplasm. The enzyme catalyses O-phospho-L-tyrosyl-[protein] + H2O = L-tyrosyl-[protein] + phosphate. In terms of biological role, is not required for vegetative growth. The sequence is that of Tyrosine-protein phosphatase 1 (PTP1) from Saccharomyces cerevisiae (strain ATCC 204508 / S288c) (Baker's yeast).